The following is a 267-amino-acid chain: Tryptophan synthase alpha chain (267 aa).

Residues E47 and D58 each act as proton acceptor in the active site.

This sequence belongs to the TrpA family. Tetramer of two alpha and two beta chains.

The enzyme catalyses (1S,2R)-1-C-(indol-3-yl)glycerol 3-phosphate + L-serine = D-glyceraldehyde 3-phosphate + L-tryptophan + H2O. The protein operates within amino-acid biosynthesis; L-tryptophan biosynthesis; L-tryptophan from chorismate: step 5/5. The alpha subunit is responsible for the aldol cleavage of indoleglycerol phosphate to indole and glyceraldehyde 3-phosphate. The sequence is that of Tryptophan synthase alpha chain from Chlorobaculum tepidum (strain ATCC 49652 / DSM 12025 / NBRC 103806 / TLS) (Chlorobium tepidum).